We begin with the raw amino-acid sequence, 348 residues long: Phosphate acyltransferase (348 aa).

This sequence belongs to the PlsX family. In terms of assembly, homodimer. Probably interacts with PlsY.

It localises to the cytoplasm. The catalysed reaction is a fatty acyl-[ACP] + phosphate = an acyl phosphate + holo-[ACP]. Its pathway is lipid metabolism; phospholipid metabolism. Its function is as follows. Catalyzes the reversible formation of acyl-phosphate (acyl-PO(4)) from acyl-[acyl-carrier-protein] (acyl-ACP). This enzyme utilizes acyl-ACP as fatty acyl donor, but not acyl-CoA. In Rhizobium etli (strain ATCC 51251 / DSM 11541 / JCM 21823 / NBRC 15573 / CFN 42), this protein is Phosphate acyltransferase.